Reading from the N-terminus, the 111-residue chain is Photosystem II reaction center Psb28 protein (111 aa).

It belongs to the Psb28 family. Part of the photosystem II complex.

Its subcellular location is the cellular thylakoid membrane. This Gloeothece citriformis (strain PCC 7424) (Cyanothece sp. (strain PCC 7424)) protein is Photosystem II reaction center Psb28 protein.